The sequence spans 427 residues: Serine--tRNA ligase (427 aa).

An L-serine-binding site is contributed by 229–231; that stretch reads TAE. 260-262 is an ATP binding site; the sequence is RSE. E283 contributes to the L-serine binding site. 347-350 is an ATP binding site; sequence EISS. S383 provides a ligand contact to L-serine.

The protein belongs to the class-II aminoacyl-tRNA synthetase family. Type-1 seryl-tRNA synthetase subfamily. As to quaternary structure, homodimer. The tRNA molecule binds across the dimer.

It is found in the cytoplasm. It carries out the reaction tRNA(Ser) + L-serine + ATP = L-seryl-tRNA(Ser) + AMP + diphosphate + H(+). It catalyses the reaction tRNA(Sec) + L-serine + ATP = L-seryl-tRNA(Sec) + AMP + diphosphate + H(+). Its pathway is aminoacyl-tRNA biosynthesis; selenocysteinyl-tRNA(Sec) biosynthesis; L-seryl-tRNA(Sec) from L-serine and tRNA(Sec): step 1/1. Catalyzes the attachment of serine to tRNA(Ser). Is also able to aminoacylate tRNA(Sec) with serine, to form the misacylated tRNA L-seryl-tRNA(Sec), which will be further converted into selenocysteinyl-tRNA(Sec). This chain is Serine--tRNA ligase, found in Nitrosococcus oceani (strain ATCC 19707 / BCRC 17464 / JCM 30415 / NCIMB 11848 / C-107).